The following is a 674-amino-acid chain: Slender lobes-like protein (674 aa).

Disordered stretches follow at residues 65–137 (LEKS…NASK), 168–321 (NELN…TIKK), and 352–382 (QKSR…RVEV). Basic residues predominate over residues 73–97 (PKKKVQTKKHLPPVRKKDSVKRRRI). Residues 127–137 (NQSNCSSNASK) are compositionally biased toward polar residues. A compositionally biased stretch (acidic residues) spans 216-228 (VDSDDEEEQDQDQ). Basic and acidic residues predominate over residues 233–245 (KPAESENHSEIKK). Ser248 is modified (phosphoserine). Over residues 272–312 (EDPKEAGKNEESDKDKPAENGKSDKDKQAETEMSDEDKPSE) the composition is skewed to basic and acidic residues. Phosphoserine is present on residues Ser358 and Ser391. 2 disordered regions span residues 395 to 585 (MVAE…AGYV) and 618 to 659 (KYFR…NSAK). Over residues 400–410 (KRQKNKRKRLS) the composition is skewed to basic residues. The residue at position 414 (Ser414) is a Phosphoserine. The span at 548-558 (AKQKKKGKKKQ) shows a compositional bias: basic residues.

In Drosophila melanogaster (Fruit fly), this protein is Slender lobes-like protein.